Here is a 123-residue protein sequence, read N- to C-terminus: Large ribosomal subunit protein bL12 (123 aa).

This sequence belongs to the bacterial ribosomal protein bL12 family. Homodimer. Part of the ribosomal stalk of the 50S ribosomal subunit. Forms a multimeric L10(L12)X complex, where L10 forms an elongated spine to which 2 to 4 L12 dimers bind in a sequential fashion. Binds GTP-bound translation factors.

Forms part of the ribosomal stalk which helps the ribosome interact with GTP-bound translation factors. Is thus essential for accurate translation. The chain is Large ribosomal subunit protein bL12 from Psychrobacter arcticus (strain DSM 17307 / VKM B-2377 / 273-4).